The chain runs to 158 residues: Ribosomal RNA large subunit methyltransferase H (158 aa).

S-adenosyl-L-methionine is bound by residues Leu74, Gly105, and 124 to 129; that span reads LGPLTL.

It belongs to the RNA methyltransferase RlmH family. In terms of assembly, homodimer.

It localises to the cytoplasm. It carries out the reaction pseudouridine(1915) in 23S rRNA + S-adenosyl-L-methionine = N(3)-methylpseudouridine(1915) in 23S rRNA + S-adenosyl-L-homocysteine + H(+). Its function is as follows. Specifically methylates the pseudouridine at position 1915 (m3Psi1915) in 23S rRNA. The sequence is that of Ribosomal RNA large subunit methyltransferase H from Xylella fastidiosa (strain 9a5c).